We begin with the raw amino-acid sequence, 143 residues long: Beta/delta-urticatoxin-Uf2b (143 aa).

An N-terminal signal peptide occupies residues 1–18 (MGAIVLVALMALVASSSA). Positions 19–80 (FSDIEHNIMK…MMLSGRPQPN (62 aa)) are excised as a propeptide. Disulfide bonds link Cys-83/Cys-100, Cys-90/Cys-105, Cys-99/Cys-113, Cys-115/Cys-129, Cys-122/Cys-134, and Cys-128/Cys-142.

Belongs to the urticatoxin-2 family. As to expression, expressed in trichomes, that are stiff epidermal hairs located on the surface of petioles and leaves.

It is found in the secreted. Functionally, plant defense neurotoxin that causes pain and systemic symptoms in mammals via modulation of voltage-gated sodium channels (Nav). Potent modulator of human Nav1.5/SCN5A (EC(50)=55 nM), Nav1.6/SCN8A (EC(50)=0.86 nM), and Nav1.7/SCN9A (EC(50)=208 nM), where it shifts the activation threshold to more negative potentials and delays fast inactivation. Also shifts the voltage-dependence of steady-state fast inactivation of Nav1.6/SCN8A, but not that of Nav1.5/SCN5A or Nav1.7/SCN9A. On Nav1.7/SCN9A, principally acts by binding to extracellular loops of domain IV (Nav site 3). In vivo, intraplantar injection into mice causes numerous dose-dependent, immediate, and long-lasting spontaneous pain behaviors, while no swelling is observed in the injected paw. At the highest doses tested, systemic symptoms including hypokinesia and hypersalivation are observed. This Urtica ferox (Tree nettle) protein is Beta/delta-urticatoxin-Uf2b.